The primary structure comprises 507 residues: Type II methyltransferase M.PstI (507 aa).

The protein belongs to the N(4)/N(6)-methyltransferase family. Monomer.

The catalysed reaction is a 2'-deoxyadenosine in DNA + S-adenosyl-L-methionine = an N(6)-methyl-2'-deoxyadenosine in DNA + S-adenosyl-L-homocysteine + H(+). Its function is as follows. A gamma subtype methylase that recognizes the double-stranded sequence 5'-CTGCAG-3', methylates A-5 on both strands, and protects the DNA from cleavage by the PstI endonuclease. The chain is Type II methyltransferase M.PstI (pstIM) from Providencia stuartii.